We begin with the raw amino-acid sequence, 274 residues long: Centromere protein K (274 aa).

The disordered stretch occupies residues Met-1–Glu-21. Residues Lys-96–Arg-159 are a coiled coil.

Belongs to the CENP-K/MCM22 family.

It is found in the nucleus. Its subcellular location is the chromosome. It localises to the centromere. The protein resides in the kinetochore. Probable component of a centromeric complex involved in assembly of kinetochore proteins, mitotic progression and chromosome segregation. This chain is Centromere protein K (cenpk), found in Xenopus laevis (African clawed frog).